An 875-amino-acid polypeptide reads, in one-letter code: Cell surface glycoprotein (875 aa).

Residues 1–23 form the signal peptide; the sequence is MTNTKQKINAVFLSALMVMSVFA. Over residues 137–157 the composition is skewed to polar residues; that stretch reads EVQNGGSGDVTGSTLQTSSSG. 2 disordered regions span residues 137 to 158 and 197 to 217; these read EVQN…SSGP and LPTA…DFDV. The span at 205 to 216 shows a compositional bias: low complexity; the sequence is DNGASGSNGDFD. N-linked (GlcNAc...) asparagine glycosylation is present at N253. The disordered stretch occupies residues 380–414; sequence YPASDSSNDGYASGGSHASSVTVRDTDGDGTDDSE. The segment covering 383–402 has biased composition (polar residues); that stretch reads SDSSNDGYASGGSHASSVTV. N-linked (GlcNAc...) asparagine glycosylation is found at N455, N563, N715, and N774. The interval 794–852 is disordered; the sequence is EAGSLEEEQPDTETPEPDTETPEPDTETPEPDTETPEPDTETPEPDTETEEATTEASGP. Over residues 797-846 the composition is skewed to acidic residues; it reads SLEEEQPDTETPEPDTETPEPDTETPEPDTETPEPDTETPEPDTETEEAT. Residues 851-875 form a helical membrane-spanning segment; the sequence is GPGFTAAIALIALVAAALLAVRRDN. The PGF sorting signal motif lies at 852 to 854; it reads PGF.

Belongs to the halobacterial S-layer protein family. Asn-455 is glycosylated by a pentasaccharide comprising a hexose, 2 hexuronic acids, a methyl ester of a hexuronic acid and a final hexose. The complete pentasaccharide is first assembled on dolichol phosphate and then transferred the glycan to the target Asn. Post-translationally, cleaved by the archaeosortase ArtA at the C-terminus, with removal of a short hydrophobic segment. In terms of processing, lipidation.

It is found in the secreted. The protein resides in the cell wall. It localises to the S-layer. The protein localises to the cell membrane. S-layer protein. The S-layer is a paracrystalline mono-layered assembly of proteins which coat the surface of the cell. In Haloarcula marismortui (strain ATCC 43049 / DSM 3752 / JCM 8966 / VKM B-1809) (Halobacterium marismortui), this protein is Cell surface glycoprotein (csg1).